Reading from the N-terminus, the 445-residue chain is Acyl-lipid (7-3)-desaturase (445 aa).

In terms of domain architecture, Cytochrome b5 heme-binding spans 11-91; the sequence is VAELRAAEVA…MSKFFVGSLD (81 aa). Heme-binding residues include histidine 50 and histidine 73. 2 consecutive transmembrane segments (helical) span residues 126 to 146 and 148 to 168; these read YWLK…YMLL and GKTL…GLNI. The Histidine box-1 signature appears at 170-174; that stretch reads HDANH. The Histidine box-2 signature appears at 205-210; that stretch reads HVVMHH. The next 3 membrane-spanning stretches (helical) occupy residues 247–267, 283–303, and 312–332; these read ILPG…LELL, LFAP…ALPL, and ALCI…FFFI. Residues 380-384 carry the Histidine box-3 motif; that stretch reads QIEHH.

The protein belongs to the fatty acid desaturase type 1 family. Fe(2+) is required as a cofactor.

It localises to the membrane. The enzyme catalyses a (7Z,10Z,13Z,16Z,19Z)-docosapentaenoyl-containing glycerolipid + 2 Fe(II)-[cytochrome b5] + O2 + 2 H(+) = a (4Z,7Z,10Z,13Z,16Z,19Z)-docosahexaenoyl-containing glycerolipid + 2 Fe(III)-[cytochrome b5] + 2 H2O. The catalysed reaction is a (7Z,10Z,13Z,16Z)-docosatetraenoyl-containing glycerolipid + 2 Fe(II)-[cytochrome b5] + O2 + 2 H(+) = a (4Z,7Z,10Z,13Z,16Z)-docosapentaenoyl-containing glycerolipid + 2 Fe(III)-[cytochrome b5] + 2 H2O. In terms of biological role, fatty acid desaturase that introduces a cis double bond at the 4-position in 22-carbon polyunsaturated fatty acids that contain a Delta(7) double bond, resulting in the production of delta-4 desaturated fatty acid docosahexanoic acid (DHA). Mediates desaturation of 22:5n-3 and 22:4n-6 into 22:6n-3 and 22:5n-6 respectively. The chain is Acyl-lipid (7-3)-desaturase from Diacronema lutheri (Unicellular marine alga).